We begin with the raw amino-acid sequence, 335 residues long: GTPase Obg (335 aa).

The region spanning 4–162 is the Obg domain; sequence GNFVDYTKIY…ADIVLELKVL (159 aa). The 170-residue stretch at 163-332 folds into the OBG-type G domain; it reads ADVGLVGFPN…LKDKLWAMLN (170 aa). GTP-binding positions include 169–176, 194–198, 216–219, 283–286, and 313–315; these read GFPNAGKS, FTTLK, DIPG, SKCD, and SSI. Mg(2+)-binding residues include Ser-176 and Thr-196.

It belongs to the TRAFAC class OBG-HflX-like GTPase superfamily. OBG GTPase family. As to quaternary structure, monomer. Mg(2+) is required as a cofactor.

The protein localises to the cytoplasm. Its function is as follows. An essential GTPase which binds GTP, GDP and possibly (p)ppGpp with moderate affinity, with high nucleotide exchange rates and a fairly low GTP hydrolysis rate. Plays a role in control of the cell cycle, stress response, ribosome biogenesis and in those bacteria that undergo differentiation, in morphogenesis control. The polypeptide is GTPase Obg (Flavobacterium psychrophilum (strain ATCC 49511 / DSM 21280 / CIP 103535 / JIP02/86)).